Consider the following 436-residue polypeptide: 3-ketoacyl-CoA thiolase (436 aa).

Catalysis depends on Cys-99, which acts as the Acyl-thioester intermediate. Residues His-392 and Cys-422 each act as proton acceptor in the active site.

It belongs to the thiolase-like superfamily. Thiolase family. Heterotetramer of two alpha chains (FadJ) and two beta chains (FadI).

It is found in the cytoplasm. It catalyses the reaction an acyl-CoA + acetyl-CoA = a 3-oxoacyl-CoA + CoA. Its pathway is lipid metabolism; fatty acid beta-oxidation. Catalyzes the final step of fatty acid oxidation in which acetyl-CoA is released and the CoA ester of a fatty acid two carbons shorter is formed. The protein is 3-ketoacyl-CoA thiolase of Salmonella heidelberg (strain SL476).